The sequence spans 389 residues: Putative F-box/kelch-repeat protein At4g35120 (389 aa).

Positions 24–70 constitute an F-box domain; sequence SMSISSLPDEIVLSFLALISKSYYRSLSLVSKSFYSLLSSTEIYAAR. Kelch repeat units follow at residues 128–174, 176–225, and 227–273; these read EIYK…FLDG, IYVI…AVSG, and RLYV…MKPI.

The protein is Putative F-box/kelch-repeat protein At4g35120 of Arabidopsis thaliana (Mouse-ear cress).